Here is a 526-residue protein sequence, read N- to C-terminus: Non-reducing end alpha-L-arabinofuranosidase BoGH43A (526 aa).

Residues 1–20 form the signal peptide; sequence MRNALFLIFISLCSVCKSSA. Residue Asp-34 is the Proton acceptor of the active site. The active-site Proton donor is the Glu-189.

This sequence belongs to the glycosyl hydrolase 43 family.

The protein resides in the periplasm. The catalysed reaction is Hydrolysis of terminal non-reducing alpha-L-arabinofuranoside residues in alpha-L-arabinosides.. It functions in the pathway glucan metabolism; xyloglucan degradation. In terms of biological role, alpha-L-arabinofuranosidase involved in xyloglucan degradation by mediating the cleavage of terminal non-reducing alpha-L-arabinofuranoside residues in xyloglucan branches, converting the 'S' units to 'X' units. The chain is Non-reducing end alpha-L-arabinofuranosidase BoGH43A from Bacteroides ovatus (strain ATCC 8483 / DSM 1896 / JCM 5824 / BCRC 10623 / CCUG 4943 / NCTC 11153).